The chain runs to 549 residues: Nucleoporin nup61 (549 aa).

Residues 1 to 32 show a composition bias toward basic and acidic residues; the sequence is MSKRGADHQLTKDQDDSDDDRHGPVEVPKEAS. Disordered regions lie at residues 1–57, 133–193, and 207–438; these read MSKR…VSSP, IEKK…GFSA, and FTPK…NEDS. Phosphoserine is present on S17. Residues 40-50 show a composition bias toward basic residues; that stretch reads KIAKPKSRKRP. The segment covering 141–165 has biased composition (polar residues); that stretch reads QPTSNAVVSEVNPQQQKSQDSSSFV. Basic and acidic residues-rich tracts occupy residues 170–180 and 217–228; these read ASSEKEDKEKP and SATEAEAKEKET. Residues 229–244 show a composition bias toward low complexity; the sequence is SSNQTATGTAATTTNQ. Basic and acidic residues-rich tracts occupy residues 282–310 and 328–339; these read ASKE…KSEN and KPIKFDTPEKKF. At S347 the chain carries Phosphoserine. Over residues 407–421 the composition is skewed to basic and acidic residues; the sequence is SEQEEKENGNDETRS. In terms of domain architecture, RanBD1 spans 416–549; the sequence is NDETRSNDSL…NEKKVSKSEN (134 aa).

The protein resides in the nucleus. Its subcellular location is the nuclear pore complex. Functionally, functions as a component of the nuclear pore complex (NPC). NPC components, collectively referred to as nucleoporins (NUPs), can play the role of both NPC structural components and of docking or interaction partners for transiently associated nuclear transport factors. Active directional transport is assured by both, a Phe-Gly (FG) repeat affinity gradient for these transport factors across the NPC and a transport cofactor concentration gradient across the nuclear envelope. May play a role in mitotic spindle formation and/or function. The chain is Nucleoporin nup61 (nup61) from Schizosaccharomyces pombe (strain 972 / ATCC 24843) (Fission yeast).